A 689-amino-acid polypeptide reads, in one-letter code: Elongation factor G (689 aa).

The tr-type G domain occupies 8-282; that stretch reads ENTRNLGIMA…AVVDYLPSPL (275 aa). Residues 17-24, 81-85, and 135-138 each bind GTP; these read AHIDAGKT, DTPGH, and NKMD.

The protein belongs to the TRAFAC class translation factor GTPase superfamily. Classic translation factor GTPase family. EF-G/EF-2 subfamily.

The protein localises to the cytoplasm. Catalyzes the GTP-dependent ribosomal translocation step during translation elongation. During this step, the ribosome changes from the pre-translocational (PRE) to the post-translocational (POST) state as the newly formed A-site-bound peptidyl-tRNA and P-site-bound deacylated tRNA move to the P and E sites, respectively. Catalyzes the coordinated movement of the two tRNA molecules, the mRNA and conformational changes in the ribosome. This Mesoplasma florum (strain ATCC 33453 / NBRC 100688 / NCTC 11704 / L1) (Acholeplasma florum) protein is Elongation factor G.